The primary structure comprises 352 residues: MSGNTFGALFTVTTFGESHGPAIGCVVDGCPPGMSLTEADIQPFLDKRKPGQSKYTTQRREEDKVQILSGVFDGKTTGAPIALLIQNTDQRSRDYEDIKNLFRPGHADFTYHYKYGHRDYRGGGRSSARETAARVAAGAIARLYLKRYLNLDIIGYLQQMGDLKLQFENENEINKNPFFCPNNKQIQELADYVDRLRRQGDSVGARVKILARGVPTGLGDPVFDKLDATLAYAMMSINAVKGVEIGAGFNAVEQLGSHHRDQMTAKGFLSNHAGGILGGIATGQPIEVSIALKPTSSITTPGQTINTEGEEVTVVTKGRHDPCVGIRAVPIAEAMMALVLMDHYLRHKAQCK.

Arg-48 serves as a coordination point for NADP(+). FMN-binding positions include 125-127, 238-239, Gly-278, 293-297, and Arg-319; these read RSS, NA, and KPTSS.

It belongs to the chorismate synthase family. Homotetramer. FMNH2 serves as cofactor.

The catalysed reaction is 5-O-(1-carboxyvinyl)-3-phosphoshikimate = chorismate + phosphate. It participates in metabolic intermediate biosynthesis; chorismate biosynthesis; chorismate from D-erythrose 4-phosphate and phosphoenolpyruvate: step 7/7. Functionally, catalyzes the anti-1,4-elimination of the C-3 phosphate and the C-6 proR hydrogen from 5-enolpyruvylshikimate-3-phosphate (EPSP) to yield chorismate, which is the branch point compound that serves as the starting substrate for the three terminal pathways of aromatic amino acid biosynthesis. This reaction introduces a second double bond into the aromatic ring system. In Legionella pneumophila subsp. pneumophila (strain Philadelphia 1 / ATCC 33152 / DSM 7513), this protein is Chorismate synthase.